Here is a 169-residue protein sequence, read N- to C-terminus: FAM231A/C-like protein LOC102723383 (169 aa).

Residues 82–140 are disordered; sequence LIRSGSSQNESQEDQGAGLISQAGLKADNRRESSTWANEVEDRRPQCTPALNLTPSHPH.

The protein belongs to the FAM231 family.

The chain is FAM231A/C-like protein LOC102723383 from Homo sapiens (Human).